The following is a 447-amino-acid chain: Gamma-glutamyl phosphate reductase (447 aa).

The protein belongs to the gamma-glutamyl phosphate reductase family.

It is found in the cytoplasm. It catalyses the reaction L-glutamate 5-semialdehyde + phosphate + NADP(+) = L-glutamyl 5-phosphate + NADPH + H(+). It functions in the pathway amino-acid biosynthesis; L-proline biosynthesis; L-glutamate 5-semialdehyde from L-glutamate: step 2/2. Functionally, catalyzes the NADPH-dependent reduction of L-glutamate 5-phosphate into L-glutamate 5-semialdehyde and phosphate. The product spontaneously undergoes cyclization to form 1-pyrroline-5-carboxylate. The chain is Gamma-glutamyl phosphate reductase from Methanosarcina acetivorans (strain ATCC 35395 / DSM 2834 / JCM 12185 / C2A).